Consider the following 348-residue polypeptide: Pheromone P-factor receptor (348 aa).

7 helical membrane passes run 46-69, 79-103, 125-141, 162-180, 207-225, 249-267, and 283-301; these read LLTG…VCLL, VFVF…TICS, VFNI…IFTA, IMTV…FWIT, YFIA…SGVF, CILV…FTII, and CLLI…STAL.

This sequence belongs to the G-protein coupled receptor 4 family.

Its subcellular location is the membrane. In terms of biological role, receptor for the peptide pheromone P-factor, a mating factor of S.pombe. Pheromone signaling is essential for initiation of meiosis in S.pombe; P-factor signaling alone may be sufficient. The sequence is that of Pheromone P-factor receptor (mam2) from Schizosaccharomyces pombe (strain 972 / ATCC 24843) (Fission yeast).